The chain runs to 341 residues: Trans-3-hydroxy-L-proline dehydratase (341 aa).

The Proton acceptor role is filled by Ser90. Substrate-binding positions include 91-92, Asp252, and 257-258; these read GS and GT.

This sequence belongs to the proline racemase family.

It catalyses the reaction trans-3-hydroxy-L-proline = 1-pyrroline-2-carboxylate + H2O. Its function is as follows. Catalyzes the dehydration of trans-3-hydroxy-L-proline (t3LHyp) to Delta(1)-pyrroline-2-carboxylate (Pyr2C). May be involved in a degradation pathway of t3LHyp, which would allow L.aggregata to grow on t3LHyp as a sole carbon source. Displays neither proline racemase activity nor 4-hydroxyproline 2-epimerase activity. The protein is Trans-3-hydroxy-L-proline dehydratase of Roseibium aggregatum (strain ATCC 25650 / DSM 13394 / JCM 20685 / NBRC 16684 / NCIMB 2208 / IAM 12614 / B1) (Stappia aggregata).